The sequence spans 112 residues: Large ribosomal subunit protein uL22 (112 aa).

This sequence belongs to the universal ribosomal protein uL22 family. As to quaternary structure, part of the 50S ribosomal subunit.

Functionally, this protein binds specifically to 23S rRNA; its binding is stimulated by other ribosomal proteins, e.g. L4, L17, and L20. It is important during the early stages of 50S assembly. It makes multiple contacts with different domains of the 23S rRNA in the assembled 50S subunit and ribosome. Its function is as follows. The globular domain of the protein is located near the polypeptide exit tunnel on the outside of the subunit, while an extended beta-hairpin is found that lines the wall of the exit tunnel in the center of the 70S ribosome. The protein is Large ribosomal subunit protein uL22 of Legionella pneumophila subsp. pneumophila (strain Philadelphia 1 / ATCC 33152 / DSM 7513).